A 225-amino-acid polypeptide reads, in one-letter code: Phosphoserine phosphatase (225 aa).

Met1 bears the N-acetylmethionine mark. The Nucleophile role is filled by Asp20. Residues Asp20 and Asp22 each coordinate Mg(2+). 20 to 22 contributes to the L-serine binding site; the sequence is DVD. Residue Asp22 is the Proton donor of the active site. Met52 serves as a coordination point for O-phospho-L-serine. Gly53 provides a ligand contact to phosphate. Residues 109–111 and Lys158 each bind L-serine; that span reads SGG. O-phospho-L-serine is bound by residues 109 to 111 and Lys158; that span reads SGG. Asp179 serves as a coordination point for Mg(2+). Thr182 contributes to the O-phospho-L-serine binding site. Thr182 contributes to the phosphate binding site.

It belongs to the HAD-like hydrolase superfamily. SerB family. As to quaternary structure, homodimer. Mg(2+) serves as cofactor.

Its subcellular location is the cytoplasm. The protein localises to the cytosol. It catalyses the reaction O-phospho-L-serine + H2O = L-serine + phosphate. The catalysed reaction is O-phospho-D-serine + H2O = D-serine + phosphate. It participates in amino-acid biosynthesis; L-serine biosynthesis; L-serine from 3-phospho-D-glycerate: step 3/3. Its activity is regulated as follows. Inhibited by calcium ions. In terms of biological role, catalyzes the last irreversible step in the biosynthesis of L-serine from carbohydrates, the dephosphorylation of O-phospho-L-serine to L-serine. L-serine can then be used in protein synthesis, to produce other amino acids, in nucleotide metabolism or in glutathione synthesis, or can be racemized to D-serine, a neuromodulator. May also act on O-phospho-D-serine. The sequence is that of Phosphoserine phosphatase from Homo sapiens (Human).